Here is a 712-residue protein sequence, read N- to C-terminus: Polyadenylation factor subunit 2 (712 aa).

The segment at 1-37 (MTAPTVPADQHGHPLPGPADPAANDTWRPSRYREPLH) is disordered. WD repeat units lie at residues 131 to 170 (KERSPTRVVRWTPDARRLLTGNDKGQFTLWNGASFNYESI), 173 to 213 (VHDD…HGFQ), 214 to 253 (GHREACHDVSWSPNDERFVTCGDDGLVKIWSYREAKEERS), 256 to 295 (GHGWDVRCVDWHPTKGLIVSGSKDMLVKFWDPRTGKDLST), 298 to 337 (SSKSTINTCRWSPDGHLVATAGQDSVIRLFDIRTFRELEV), 340 to 380 (GHEK…PSTP), and 387 to 426 (AHEDAVFSLSFHPLGHILCSGSKDFTARFWCRARPPGGQE). Disordered regions lie at residues 446 to 473 (TKREWGTNAPPANAAGGGGGGGGDKQQV) and 489 to 712 (KTGP…DGRR). 2 stretches are compositionally biased toward gly residues: residues 460–469 (AGGGGGGGGD) and 494–504 (TTGGGPSGLPG). A compositionally biased stretch (low complexity) spans 533–545 (QGQAQGGQFPRGR). Over residues 565-592 (FADRDRNGGGDRGGMDRDRDSRGGRQDP) the composition is skewed to basic and acidic residues. 2 stretches are compositionally biased toward pro residues: residues 603 to 612 (GGPPPGPPPG) and 619 to 671 (PPAP…PQGP). Over residues 678 to 712 (GGQGNYGASASGGYGQYGGGGGGGGGGGYGRDGRR) the composition is skewed to gly residues.

It localises to the nucleus. Its function is as follows. Required for 3'-end cleavage and polyadenylation of pre-mRNAs. Also involved in chromosome segregation where it has a role in chromosome attachment to the mitotic spindle. The sequence is that of Polyadenylation factor subunit 2 (PFS2) from Cryptococcus neoformans var. neoformans serotype D (strain JEC21 / ATCC MYA-565) (Filobasidiella neoformans).